Reading from the N-terminus, the 479-residue chain is Ribulose bisphosphate carboxylase large chain (479 aa).

A propeptide spanning residues 1-2 (MS) is cleaved from the precursor. Asn123 and Thr173 together coordinate substrate. The active-site Proton acceptor is the Lys175. Residue Lys177 participates in substrate binding. Mg(2+) contacts are provided by Lys201, Asp203, and Glu204. Position 201 is an N6-carboxylysine (Lys201). A Phosphoserine modification is found at Ser208. His294 serves as the catalytic Proton acceptor. Substrate is bound by residues Arg295 and His327. Position 330 is a phosphothreonine (Thr330). Ser379 is a substrate binding site.

This sequence belongs to the RuBisCO large chain family. Type I subfamily. As to quaternary structure, heterohexadecamer of 8 large chains and 8 small chains; disulfide-linked. The disulfide link is formed within the large subunit homodimers. The cofactor is Mg(2+). In terms of processing, the disulfide bond which can form in the large chain dimeric partners within the hexadecamer appears to be associated with oxidative stress and protein turnover.

The protein resides in the plastid. The protein localises to the chloroplast. The catalysed reaction is 2 (2R)-3-phosphoglycerate + 2 H(+) = D-ribulose 1,5-bisphosphate + CO2 + H2O. The enzyme catalyses D-ribulose 1,5-bisphosphate + O2 = 2-phosphoglycolate + (2R)-3-phosphoglycerate + 2 H(+). Its function is as follows. RuBisCO catalyzes two reactions: the carboxylation of D-ribulose 1,5-bisphosphate, the primary event in carbon dioxide fixation, as well as the oxidative fragmentation of the pentose substrate in the photorespiration process. Both reactions occur simultaneously and in competition at the same active site. The polypeptide is Ribulose bisphosphate carboxylase large chain (Olimarabidopsis pumila (Dwarf rocket)).